The chain runs to 509 residues: Scavenger receptor class B member 1 (509 aa).

Topologically, residues 1–11 are cytoplasmic; it reads MGNLSRARRVT. Residues 12-32 form a helical membrane-spanning segment; the sequence is AALGFIGLLFAVLGIIMIVMV. Over 33 to 440 the chain is Extracellular; the sequence is PSIIKQQVLK…YIQLVLMPKV (408 aa). N-linked (GlcNAc...) asparagine glycosylation is found at asparagine 102, asparagine 108, asparagine 173, asparagine 212, asparagine 227, asparagine 255, asparagine 310, asparagine 330, and asparagine 383. An intrachain disulfide couples cysteine 251 to cysteine 384. Residues 441 to 461 traverse the membrane as a helical segment; it reads LHYAQYVLLALGCVLLLIPII. Residues 462–509 are Cytoplasmic-facing; it reads YQIRSQEKCYLFWISFKKGSKDKEAVQAYSEFLMTSAPKGTVLQEARL.

This sequence belongs to the CD36 family. N-glycosylated. Post-translationally, the six cysteines of the extracellular domain are all involved in intramolecular disulfide bonds.

It is found in the cell membrane. The protein localises to the membrane. The protein resides in the caveola. Its function is as follows. Receptor for different ligands such as phospholipids, cholesterol ester, lipoproteins, phosphatidylserine and apoptotic cells. Receptor for HDL, mediating selective uptake of cholesteryl ether and HDL-dependent cholesterol efflux. Also facilitates the flux of free and esterified cholesterol between the cell surface and apoB-containing lipoproteins and modified lipoproteins, although less efficiently than HDL. May be involved in the phagocytosis of apoptotic cells, via its phosphatidylserine binding activity. This is Scavenger receptor class B member 1 (SCARB1) from Bos taurus (Bovine).